Reading from the N-terminus, the 322-residue chain is UDP-N-acetylenolpyruvoylglucosamine reductase (322 aa).

In terms of domain architecture, FAD-binding PCMH-type spans 36–202; that stretch reads RAGGPAQVLF…TSVLFEGVPG (167 aa). Arg-182 is an active-site residue. The active-site Proton donor is Ser-231. Residue Glu-301 is part of the active site.

Belongs to the MurB family. Requires FAD as cofactor.

Its subcellular location is the cytoplasm. It carries out the reaction UDP-N-acetyl-alpha-D-muramate + NADP(+) = UDP-N-acetyl-3-O-(1-carboxyvinyl)-alpha-D-glucosamine + NADPH + H(+). It functions in the pathway cell wall biogenesis; peptidoglycan biosynthesis. Its function is as follows. Cell wall formation. The polypeptide is UDP-N-acetylenolpyruvoylglucosamine reductase (Brucella abortus (strain S19)).